Here is a 183-residue protein sequence, read N- to C-terminus: Ankyrin repeat domain-containing protein 39 (183 aa).

4 ANK repeats span residues 30 to 59, 63 to 92, 96 to 125, and 129 to 158; these read DFERGIWSAALNGDLGRVKYLIQKAVDPSQ, AGYTALHYASRNGHYAVCQFLLESGAKCDA, GGATALHRASYCGHTDIARLLLSHGSNPRL, and DGMTSLHKAAEKGHVDICSLLLQHSPALKA. At S153 the chain carries Phosphoserine.

The protein belongs to the ANKRD39 family.

The protein is Ankyrin repeat domain-containing protein 39 (ANKRD39) of Bos taurus (Bovine).